Reading from the N-terminus, the 885-residue chain is Cytosolic carboxypeptidase-like protein 5 (885 aa).

Residues 157–570 (YPFSYSDCQD…AMAIAALDMA (414 aa)) form the Peptidase M14 domain. Zn(2+) is bound by residues His252 and Glu255. The disordered stretch occupies residues 343–402 (NSQSPSEHQHSSHLPPDAPLSDPEKADSLQNRAHLGRSSSGDKPEAWTQTEVAEQKPNSV). Residues 388 to 402 (AWTQTEVAEQKPNSV) are compositionally biased toward polar residues. Position 434 (His434) interacts with Zn(2+). Glu516 functions as the Proton donor/acceptor in the catalytic mechanism. Disordered stretches follow at residues 605-733 (TTVN…LASS) and 783-839 (RLQA…PRPC). Polar residues predominate over residues 620–640 (PPRSNNGLPVSCSENTLSRAR). Composition is skewed to low complexity over residues 641 to 666 (SFST…NSPS) and 714 to 733 (PTSS…LASS). Ser840 is modified (phosphoserine).

This sequence belongs to the peptidase M14 family. The cofactor is Zn(2+).

Its subcellular location is the cytoplasm. The protein resides in the cytosol. It is found in the nucleus. It localises to the cytoskeleton. The protein localises to the spindle. Its subcellular location is the midbody. It carries out the reaction gamma-L-glutamyl-L-glutamyl-[protein] + H2O = L-glutamyl-[protein] + L-glutamate. The catalysed reaction is (L-glutamyl)(n+1)-gamma-L-glutamyl-L-glutamyl-[protein] + H2O = (L-glutamyl)(n)-gamma-L-glutamyl-L-glutamyl-[protein] + L-glutamate. It catalyses the reaction C-terminal L-alpha-aminoacyl-L-glutamyl-[tubulin] + H2O = C-terminal L-alpha-aminoacyl-[tubulin] + L-glutamate. The enzyme catalyses C-terminal L-alpha-aminoacyl-L-glutamyl-L-glutamyl-[tubulin] + H2O = C-terminal L-alpha-aminoacyl-L-glutamyl-[tubulin] + L-glutamate. Metallocarboxypeptidase that mediates deglutamylation of tubulin and non-tubulin target proteins. Catalyzes the removal of polyglutamate side chains present on the gamma-carboxyl group of glutamate residues within the C-terminal tail of alpha- and beta-tubulin. Cleaves alpha- and gamma-linked polyglutamate tubulin side-chain, as well as the branching point glutamate. Also catalyzes the removal of alpha-linked glutamate residues from the carboxy-terminus of alpha-tubulin. Mediates deglutamylation of nucleotidyltransferase CGAS, leading to CGAS antiviral defense response activation. The polypeptide is Cytosolic carboxypeptidase-like protein 5 (AGBL5) (Bos taurus (Bovine)).